Reading from the N-terminus, the 107-residue chain is Sperm protamine P1 (107 aa).

Basic and acidic residues-rich tracts occupy residues Ala-1–Phe-10 and Arg-20–Gly-33. Residues Ala-1–Gly-35 constitute a propeptide, removed in mature form. The segment at Ala-1–Lys-107 is disordered. Residues His-34–Lys-107 are compositionally biased toward basic residues. The residue at position 42 (Ser-42) is a Phosphoserine.

A series of N-terminal cleavages yield the mature protein. Post-translationally, only the mature protein is phosphorylated. In terms of tissue distribution, gonads.

The protein resides in the nucleus. It is found in the chromosome. In terms of biological role, protamines substitute for histones in the chromatin of sperm during the haploid phase of spermatogenesis. They compact sperm DNA into a highly condensed, stable and inactive complex. This is Sperm protamine P1 from Bolinus brandaris (Purple dye murex).